A 328-amino-acid polypeptide reads, in one-letter code: Beta-ketoacyl-[acyl-carrier-protein] synthase III (328 aa).

Active-site residues include Cys-122 and His-255. The segment at 256–260 (QANIR) is ACP-binding. Asn-285 is an active-site residue.

The protein belongs to the thiolase-like superfamily. FabH family. Homodimer.

Its subcellular location is the cytoplasm. The catalysed reaction is malonyl-[ACP] + acetyl-CoA + H(+) = 3-oxobutanoyl-[ACP] + CO2 + CoA. It functions in the pathway lipid metabolism; fatty acid biosynthesis. Functionally, catalyzes the condensation reaction of fatty acid synthesis by the addition to an acyl acceptor of two carbons from malonyl-ACP. Catalyzes the first condensation reaction which initiates fatty acid synthesis and may therefore play a role in governing the total rate of fatty acid production. Possesses both acetoacetyl-ACP synthase and acetyl transacylase activities. Its substrate specificity determines the biosynthesis of branched-chain and/or straight-chain of fatty acids. This Polynucleobacter necessarius subsp. necessarius (strain STIR1) protein is Beta-ketoacyl-[acyl-carrier-protein] synthase III.